The following is a 693-amino-acid chain: Glycine--tRNA ligase beta subunit (693 aa).

Residues 65–74 (QPDKSVEKRG) are compositionally biased toward basic and acidic residues. Positions 65–84 (QPDKSVEKRGPAVKAAFDDS) are disordered.

It belongs to the class-II aminoacyl-tRNA synthetase family. Tetramer of two alpha and two beta subunits.

It localises to the cytoplasm. It catalyses the reaction tRNA(Gly) + glycine + ATP = glycyl-tRNA(Gly) + AMP + diphosphate. The protein is Glycine--tRNA ligase beta subunit of Marinobacter nauticus (strain ATCC 700491 / DSM 11845 / VT8) (Marinobacter aquaeolei).